A 394-amino-acid chain; its full sequence is 1-deoxy-D-xylulose 5-phosphate reductoisomerase (394 aa).

NADPH is bound by residues Thr12, Gly13, Ser14, Ile15, Lys39, Gln40, and Asn126. A 1-deoxy-D-xylulose 5-phosphate-binding site is contributed by Lys127. Glu128 is an NADPH binding site. Asp152 provides a ligand contact to Mn(2+). 1-deoxy-D-xylulose 5-phosphate contacts are provided by Ser153, Glu154, Ser183, and His206. Mn(2+) is bound at residue Glu154. An NADPH-binding site is contributed by Gly212. 4 residues coordinate 1-deoxy-D-xylulose 5-phosphate: Ser219, Asn224, Lys225, and Glu228. Glu228 serves as a coordination point for Mn(2+).

Belongs to the DXR family. Mg(2+) is required as a cofactor. It depends on Mn(2+) as a cofactor.

It catalyses the reaction 2-C-methyl-D-erythritol 4-phosphate + NADP(+) = 1-deoxy-D-xylulose 5-phosphate + NADPH + H(+). It functions in the pathway isoprenoid biosynthesis; isopentenyl diphosphate biosynthesis via DXP pathway; isopentenyl diphosphate from 1-deoxy-D-xylulose 5-phosphate: step 1/6. Its function is as follows. Catalyzes the NADPH-dependent rearrangement and reduction of 1-deoxy-D-xylulose-5-phosphate (DXP) to 2-C-methyl-D-erythritol 4-phosphate (MEP). The sequence is that of 1-deoxy-D-xylulose 5-phosphate reductoisomerase from Neisseria meningitidis serogroup B (strain ATCC BAA-335 / MC58).